The following is a 383-amino-acid chain: Mannitol-1-phosphate 5-dehydrogenase (383 aa).

Residue 3–14 (AVHFGAGNIGRG) participates in NAD(+) binding.

The protein belongs to the mannitol dehydrogenase family.

It carries out the reaction D-mannitol 1-phosphate + NAD(+) = beta-D-fructose 6-phosphate + NADH + H(+). In Lacticaseibacillus casei (strain BL23) (Lactobacillus casei), this protein is Mannitol-1-phosphate 5-dehydrogenase.